Reading from the N-terminus, the 552-residue chain is Transcription factor kayak (552 aa).

2 disordered regions span residues 110–145 and 177–234; these read LAQG…TDST and GAAS…KRRV. Positions 111–127 are enriched in polar residues; sequence AQGSDSEDSNASYNDTQ. The segment covering 135–145 has biased composition (low complexity); the sequence is TDTSSAHTDST. Polar residues predominate over residues 177-192; it reads GAASVGSSNANTSNTP. The region spanning 212-275 is the bZIP domain; the sequence is EQKRAVRRER…NQLEYCLAAH (64 aa). A basic motif region spans residues 214–233; sequence KRAVRRERNKQAAARCRKRR. Positions 240-247 are leucine-zipper; that stretch reads LTEEVEQL. Residues 304-325 are compositionally biased toward low complexity; sequence AGSSGSGASSHHNHNSNDSSNG. Disordered regions lie at residues 304–346, 365–390, and 514–552; these read AGSS…PLDL, LDGA…TLPP, and GGTG…LVSL. The span at 333–343 shows a compositional bias: polar residues; sequence TLNSTGRSNSP. S342 bears the Phosphoserine mark.

It belongs to the bZIP family. Fos subfamily. In terms of assembly, homodimer. Heterodimer with Jra. The kay-Jra heterodimer binds more stably to the AP-1 site than either of the two proteins alone.

The protein resides in the nucleus. Functionally, developmentally regulated transcription factor AP-1 binds and recognizes the enhancer DNA sequence: 5'-TGA[CG]TCA-3'. May play a role in the function or determination of a particular subset of cells in the developing embryo. It is able to carry out its function either independently of or in conjunction with Jra. This chain is Transcription factor kayak, found in Drosophila yakuba (Fruit fly).